The primary structure comprises 363 residues: tRNA/tmRNA (uracil-C(5))-methyltransferase (363 aa).

Positions 187, 215, 220, 236, and 296 each coordinate S-adenosyl-L-methionine. C321 functions as the Nucleophile in the catalytic mechanism. E355 functions as the Proton acceptor in the catalytic mechanism.

Belongs to the class I-like SAM-binding methyltransferase superfamily. RNA M5U methyltransferase family. TrmA subfamily.

The enzyme catalyses uridine(54) in tRNA + S-adenosyl-L-methionine = 5-methyluridine(54) in tRNA + S-adenosyl-L-homocysteine + H(+). It catalyses the reaction uridine(341) in tmRNA + S-adenosyl-L-methionine = 5-methyluridine(341) in tmRNA + S-adenosyl-L-homocysteine + H(+). Dual-specificity methyltransferase that catalyzes the formation of 5-methyluridine at position 54 (m5U54) in all tRNAs, and that of position 341 (m5U341) in tmRNA (transfer-mRNA). The protein is tRNA/tmRNA (uracil-C(5))-methyltransferase of Pseudomonas fluorescens.